Reading from the N-terminus, the 459-residue chain is Argininosuccinate lyase (459 aa).

It belongs to the lyase 1 family. Argininosuccinate lyase subfamily.

It is found in the cytoplasm. The catalysed reaction is 2-(N(omega)-L-arginino)succinate = fumarate + L-arginine. The protein operates within amino-acid biosynthesis; L-arginine biosynthesis; L-arginine from L-ornithine and carbamoyl phosphate: step 3/3. This chain is Argininosuccinate lyase, found in Bacillus licheniformis (strain ATCC 14580 / DSM 13 / JCM 2505 / CCUG 7422 / NBRC 12200 / NCIMB 9375 / NCTC 10341 / NRRL NRS-1264 / Gibson 46).